Here is a 362-residue protein sequence, read N- to C-terminus: Protein mab-21-like 3 (362 aa).

The protein belongs to the mab-21 family.

The polypeptide is Protein mab-21-like 3 (MAB21L3) (Homo sapiens (Human)).